We begin with the raw amino-acid sequence, 297 residues long: Acetylglutamate kinase (297 aa).

Substrate contacts are provided by residues 73 to 74, arginine 95, and asparagine 188; that span reads GG.

This sequence belongs to the acetylglutamate kinase family. ArgB subfamily.

The protein localises to the cytoplasm. It carries out the reaction N-acetyl-L-glutamate + ATP = N-acetyl-L-glutamyl 5-phosphate + ADP. It functions in the pathway amino-acid biosynthesis; L-arginine biosynthesis; N(2)-acetyl-L-ornithine from L-glutamate: step 2/4. Catalyzes the ATP-dependent phosphorylation of N-acetyl-L-glutamate. In Trichormus variabilis (strain ATCC 29413 / PCC 7937) (Anabaena variabilis), this protein is Acetylglutamate kinase.